The chain runs to 886 residues: Alanine--tRNA ligase (886 aa).

Zn(2+) contacts are provided by His-564, His-568, Cys-666, and His-670.

This sequence belongs to the class-II aminoacyl-tRNA synthetase family. It depends on Zn(2+) as a cofactor.

It is found in the cytoplasm. The enzyme catalyses tRNA(Ala) + L-alanine + ATP = L-alanyl-tRNA(Ala) + AMP + diphosphate. Catalyzes the attachment of alanine to tRNA(Ala) in a two-step reaction: alanine is first activated by ATP to form Ala-AMP and then transferred to the acceptor end of tRNA(Ala). Also edits incorrectly charged Ser-tRNA(Ala) and Gly-tRNA(Ala) via its editing domain. In Prochlorococcus marinus subsp. pastoris (strain CCMP1986 / NIES-2087 / MED4), this protein is Alanine--tRNA ligase.